Consider the following 451-residue polypeptide: Protein tweety homolog 1-B (451 aa).

Residues 1 to 43 (MSTSHGYRASWWTYILHQVPHTNFQFEVVDNQFAPQEWSYQQA) lie on the Extracellular side of the membrane. Residues 44-64 (LLFLASIAGLCLAISLVLICV) form a helical membrane-spanning segment. Residues 65 to 86 (YLIKFCCCASQEDDDSKSHRVC) lie on the Cytoplasmic side of the membrane. The chain crosses the membrane as a helical span at residues 87–107 (CVTWSCVAAVIICCAGIGIGF). The Extracellular portion of the chain corresponds to 108-214 (YGNSETNDGV…QVNFIEDYRW (107 aa)). A glycan (N-linked (GlcNAc...) asparagine) is linked at Asn128. The helical transmembrane segment at 215 to 235 (LAYILLLLLDLIICLFTLLSL) threads the bilayer. At 236–240 (AKQIK) the chain is on the cytoplasmic side. A helical membrane pass occupies residues 241-261 (WLVIVMTVVSFFVLLLSWGSM). Residues 262–390 (GLEMATAVGL…LKGLCYDGME (129 aa)) lie on the Extracellular side of the membrane. 2 cysteine pairs are disulfide-bonded: Cys275-Cys385 and Cys303-Cys370. Asn284 and Asn355 each carry an N-linked (GlcNAc...) asparagine glycan. Residues 391–411 (GILFLLLFSFLSALSFTAAVC) form a helical membrane-spanning segment. At 412–451 (SLPRAWKRFRNRDLDYDDMDEDDPFNPQESKRFVQWQSSI) the chain is on the cytoplasmic side.

The protein belongs to the tweety family. In terms of assembly, homotetramer; disulfide-linked. Homodimer.

The protein localises to the cell membrane. The catalysed reaction is chloride(in) = chloride(out). The enzyme catalyses L-glutamate(out) = L-glutamate(in). Functionally, may act as a calcium-independent, swelling-dependent volume-regulated anion channel (VRAC-swell) which plays a pivotal role in the process of regulatory volume decrease (RVD) in the brain through the efflux of anions like chloride and organic osmolytes like glutamate. This chain is Protein tweety homolog 1-B (ttyh1-b), found in Xenopus laevis (African clawed frog).